The chain runs to 302 residues: N-acetyl-D-glucosamine kinase (302 aa).

ATP-binding positions include 4-11 and 133-140; these read GFDVGGTK and GFGGGLVF. His-157, Cys-177, Cys-179, and Cys-184 together coordinate Zn(2+).

The protein belongs to the ROK (NagC/XylR) family. NagK subfamily.

The catalysed reaction is N-acetyl-D-glucosamine + ATP = N-acetyl-D-glucosamine 6-phosphate + ADP + H(+). Its pathway is cell wall biogenesis; peptidoglycan recycling. Catalyzes the phosphorylation of N-acetyl-D-glucosamine (GlcNAc) derived from cell-wall degradation, yielding GlcNAc-6-P. This is N-acetyl-D-glucosamine kinase from Aliivibrio salmonicida (strain LFI1238) (Vibrio salmonicida (strain LFI1238)).